A 98-amino-acid chain; its full sequence is NADH-ubiquinone oxidoreductase chain 4L (98 aa).

3 consecutive transmembrane segments (helical) span residues 1–21 (MSLV…GLLM), 29–49 (SLLC…LMIL), and 61–81 (IILL…LVMV).

The protein belongs to the complex I subunit 4L family. In terms of assembly, core subunit of respiratory chain NADH dehydrogenase (Complex I) which is composed of 45 different subunits.

The protein localises to the mitochondrion inner membrane. It catalyses the reaction a ubiquinone + NADH + 5 H(+)(in) = a ubiquinol + NAD(+) + 4 H(+)(out). Its function is as follows. Core subunit of the mitochondrial membrane respiratory chain NADH dehydrogenase (Complex I) which catalyzes electron transfer from NADH through the respiratory chain, using ubiquinone as an electron acceptor. Part of the enzyme membrane arm which is embedded in the lipid bilayer and involved in proton translocation. In Pantholops hodgsonii (Chiru), this protein is NADH-ubiquinone oxidoreductase chain 4L (MT-ND4L).